The primary structure comprises 579 residues: Salivary alpha-glucosidase (579 aa).

The N-terminal stretch at 1-18 is a signal peptide; the sequence is MKIFVPLLSFLLAGLTTG. Residues Asp37, Asp39, Asp41, Ile43, Asp45, and Asn118 each coordinate Ca(2+). N-linked (GlcNAc...) asparagine glycans are attached at residues Asn118 and Asn151. Asp189 is a Ca(2+) binding site. Asp219 (nucleophile) is an active-site residue. Residues Tyr223, Leu224, and Glu226 each coordinate Ca(2+). Asn282 carries N-linked (GlcNAc...) asparagine glycosylation. Catalysis depends on Glu290, which acts as the Proton donor. Residues Asn304, Asn325, and Asn401 are each glycosylated (N-linked (GlcNAc...) asparagine). Asn325 lines the N-acetyl-beta-D-glucosamine pocket.

This sequence belongs to the glycosyl hydrolase 13 family. In terms of tissue distribution, saliva (at protein level). Proximal lateral lobes of the salivary gland (at protein level).

The protein localises to the secreted. It carries out the reaction Hydrolysis of terminal, non-reducing (1-&gt;4)-linked alpha-D-glucose residues with release of alpha-D-glucose.. Functionally, functions as a glucosidase that shows high activity toward sucrose, a major component of nectar. Assists the mosquito in its sugar-feeding capabilities. The sequence is that of Salivary alpha-glucosidase from Aedes aegypti (Yellowfever mosquito).